Consider the following 126-residue polypeptide: S-adenosylmethionine decarboxylase proenzyme (126 aa).

The active-site Schiff-base intermediate with substrate; via pyruvic acid is Ser63. Ser63 is subject to Pyruvic acid (Ser); by autocatalysis. His68 acts as the Proton acceptor; for processing activity in catalysis. Cys83 serves as the catalytic Proton donor; for catalytic activity.

The protein belongs to the prokaryotic AdoMetDC family. Type 1 subfamily. As to quaternary structure, heterotetramer of two alpha and two beta chains arranged as a dimer of alpha/beta heterodimers. Pyruvate serves as cofactor. In terms of processing, is synthesized initially as an inactive proenzyme. Formation of the active enzyme involves a self-maturation process in which the active site pyruvoyl group is generated from an internal serine residue via an autocatalytic post-translational modification. Two non-identical subunits are generated from the proenzyme in this reaction, and the pyruvate is formed at the N-terminus of the alpha chain, which is derived from the carboxyl end of the proenzyme. The post-translation cleavage follows an unusual pathway, termed non-hydrolytic serinolysis, in which the side chain hydroxyl group of the serine supplies its oxygen atom to form the C-terminus of the beta chain, while the remainder of the serine residue undergoes an oxidative deamination to produce ammonia and the pyruvoyl group blocking the N-terminus of the alpha chain.

It catalyses the reaction S-adenosyl-L-methionine + H(+) = S-adenosyl 3-(methylsulfanyl)propylamine + CO2. It functions in the pathway amine and polyamine biosynthesis; S-adenosylmethioninamine biosynthesis; S-adenosylmethioninamine from S-adenosyl-L-methionine: step 1/1. Catalyzes the decarboxylation of S-adenosylmethionine to S-adenosylmethioninamine (dcAdoMet), the propylamine donor required for the synthesis of the polyamines spermine and spermidine from the diamine putrescine. This is S-adenosylmethionine decarboxylase proenzyme from Bacillus velezensis (strain DSM 23117 / BGSC 10A6 / LMG 26770 / FZB42) (Bacillus amyloliquefaciens subsp. plantarum).